Here is a 356-residue protein sequence, read N- to C-terminus: S-adenosylmethionine:tRNA ribosyltransferase-isomerase (356 aa).

It belongs to the QueA family. In terms of assembly, monomer.

Its subcellular location is the cytoplasm. It carries out the reaction 7-aminomethyl-7-carbaguanosine(34) in tRNA + S-adenosyl-L-methionine = epoxyqueuosine(34) in tRNA + adenine + L-methionine + 2 H(+). Its pathway is tRNA modification; tRNA-queuosine biosynthesis. Functionally, transfers and isomerizes the ribose moiety from AdoMet to the 7-aminomethyl group of 7-deazaguanine (preQ1-tRNA) to give epoxyqueuosine (oQ-tRNA). The chain is S-adenosylmethionine:tRNA ribosyltransferase-isomerase from Shigella dysenteriae serotype 1 (strain Sd197).